The chain runs to 822 residues: Pentatricopeptide repeat-containing protein At2g18940, chloroplastic (822 aa).

The segment at 1–42 (MDGALFPHKPPYPIQSKRPPPSQSSNQSIKFSSATLHLPPPS) is disordered. A chloroplast-targeting transit peptide spans 1 to 77 (MDGALFPHKP…SAAARFPSLE (77 aa)). Residues 8–22 (HKPPYPIQSKRPPPS) show a composition bias toward pro residues. Low complexity predominate over residues 23–37 (QSSNQSIKFSSATLH). 17 PPR repeats span residues 209 to 243 (DVRA…GPSP), 244 to 279 (TLVT…GLKF), 280 to 314 (DEFT…GYEP), 315 to 349 (GTVT…SCPA), 350 to 384 (DSVT…GVMP), 385 to 419 (NAIT…GCVP), 420 to 454 (NTCT…GCSP), 455 to 489 (NRAT…GFEP), 490 to 524 (DRDT…GFNA), 525 to 559 (CVTT…GFKP), 560 to 594 (TETS…QIFP), 595 to 629 (SWML…GYKP), 630 to 664 (DMVI…GLSP), 665 to 699 (DLVT…QLKP), 700 to 734 (DLVS…GIRP), 735 to 769 (CIFT…DCRP), and 770 to 800 (NELT…IKTF).

Belongs to the PPR family. P subfamily.

The protein resides in the plastid. Its subcellular location is the chloroplast. The polypeptide is Pentatricopeptide repeat-containing protein At2g18940, chloroplastic (Arabidopsis thaliana (Mouse-ear cress)).